Here is a 307-residue protein sequence, read N- to C-terminus: N-myc-interactor (307 aa).

The disordered stretch occupies residues Met-1–Glu-24. The residue at position 16 (Ser-16) is a Phosphoserine. Residue Lys-22 forms a Glycyl lysine isopeptide (Lys-Gly) (interchain with G-Cter in ubiquitin) linkage. A coiled-coil region spans residues Ile-30–Ile-64. 2 consecutive NID domains span residues Gly-103 to Asp-192 and Gly-201 to Val-292.

This sequence belongs to the NMI family. In terms of assembly, interacts with MYCN and MYC, as well as with other transcription factors with a Zip, HLH or a HLH-Zip motif. Interacts with all STAT proteins except STAT2. Interacts with IRF7, the interaction is direct and leads to the inhibition of IRF7-mediated type I IFN production. Interacts (via coiled-coil domain) with TRIM21 (via the SPRY domain); the interaction leads to 'Lys-63'-linked ubiquitination of NMI. Interacts with IFI35; the interaction is direct and is facilitated by TRIM21. Interacts with TLR4; the interaction is direct and leads to NF-kappa-B activation. (Microbial infection) Interacts with human cytomegalovirus protein UL23; this interaction inhibits NMI-mediated transcription of interferon-gamma stimulated genes. In terms of processing, ubiquitinated. 'Lys-63'-linked ubiquitination by TRIM21 promotes interaction with IFI35 and inhibits virus-triggered type I IFN-beta production. Expressed in adult spleen, liver, and kidney. Expressed in fetal thymus, liver, placenta, spleen, lung, and kidney but not brain. Expressed in macrophages.

It is found in the cytoplasm. It localises to the nucleus. Its subcellular location is the secreted. Acts as a signaling pathway regulator involved in innate immune system response. In response to interleukin 2/IL2 and interferon IFN-gamma/IFNG, interacts with signal transducer and activator of transcription/STAT which activate the transcription of downstream genes involved in a multitude of signals for development and homeostasis. Enhances the recruitment of CBP/p300 coactivators to STAT1 and STAT5, resulting in increased STAT1- and STAT5-dependent transcription. In response to interferon IFN-alpha, associates in a complex with signaling pathway regulator IFI35 to regulate immune response; the complex formation prevents proteasome-mediated degradation of IFI35. In complex with IFI35, inhibits virus-triggered type I IFN-beta production when ubiquitinated by ubiquitin-protein ligase TRIM21. In complex with IFI35, negatively regulates nuclear factor NF-kappa-B signaling by inhibiting the nuclear translocation, activation and transcription of NF-kappa-B subunit p65/RELA, resulting in the inhibition of endothelial cell proliferation, migration and re-endothelialization of injured arteries. Negatively regulates virus-triggered type I interferon/IFN production by inducing proteosome-dependent degradation of IRF7, a transcriptional regulator of type I IFN, thereby interfering with cellular antiviral responses. Beside its role as an intracellular signaling pathway regulator, also functions extracellularly as damage-associated molecular patterns (DAMPs) to promote inflammation, when actively released by macrophage to the extracellular space during cell injury or pathogen invasion. Macrophage-secreted NMI activates NF-kappa-B signaling in adjacent macrophages through Toll-like receptor 4/TLR4 binding and activation, thereby inducing NF-kappa-B translocation from the cytoplasm into the nucleus which promotes the release of pro-inflammatory cytokines. The protein is N-myc-interactor of Homo sapiens (Human).